Here is a 284-residue protein sequence, read N- to C-terminus: Four and a half LIM domains protein 5 (284 aa).

A C4-type zinc finger spans residues 8–32 (CQYCTSSLIGKKYVLKDDNLYCISC). LIM zinc-binding domains follow at residues 39 to 100 (NYCE…ECSS), 101 to 160 (KCFH…KEFA), and 161 to 220 (HYCN…LYAK).

In terms of assembly, interacts with CREM (via the third LIM domain). Interacts (via second LIM domain) with SPAG8. As to expression, testis-specific, temporal expression is coordinated with CREM.

Its subcellular location is the nucleus. Functionally, may be involved in the regulation of spermatogenesis. Stimulates CREM transcriptional activity in a phosphorylation-independent manner. In Mus musculus (Mouse), this protein is Four and a half LIM domains protein 5 (Fhl5).